Reading from the N-terminus, the 313-residue chain is Ribosomal RNA small subunit methyltransferase H (313 aa).

Residues 35–37 (GGH), Asp55, Phe81, Asp103, and Gln110 each bind S-adenosyl-L-methionine.

It belongs to the methyltransferase superfamily. RsmH family.

The protein localises to the cytoplasm. It catalyses the reaction cytidine(1402) in 16S rRNA + S-adenosyl-L-methionine = N(4)-methylcytidine(1402) in 16S rRNA + S-adenosyl-L-homocysteine + H(+). Its function is as follows. Specifically methylates the N4 position of cytidine in position 1402 (C1402) of 16S rRNA. The polypeptide is Ribosomal RNA small subunit methyltransferase H (Pseudomonas syringae pv. syringae (strain B728a)).